The following is a 464-amino-acid chain: D-2-hydroxyglutarate dehydrogenase (464 aa).

Positions 37 to 216 (FAPAPSAIVF…VEATMRLERQ (180 aa)) constitute an FAD-binding PCMH-type domain. The (R)-2-hydroxyglutarate site is built by Arg-325, Ser-329, and Lys-339. Residues Arg-325, Ser-329, and Lys-339 each contribute to the (R)-malate site. Residues His-374 and His-381 each contribute to the Zn(2+) site. Asn-383 lines the (R)-2-hydroxyglutarate pocket. Glu-420 lines the Zn(2+) pocket. His-421 is a binding site for (R)-2-hydroxyglutarate. His-421 contributes to the (R)-malate binding site.

This sequence belongs to the FAD-binding oxidoreductase/transferase type 4 family. Homodimer. FAD is required as a cofactor.

The enzyme catalyses (R)-2-hydroxyglutarate + A = 2-oxoglutarate + AH2. It carries out the reaction (R)-malate + A = oxaloacetate + AH2. Activated by Zn(2+) ions at low concentrations (10 uM) and inhibited by Zn(2+), Fe(2+) and Ni(2+) at high concentrations (10 mM). Its function is as follows. Catalyzes the dehydrogenation of (R)-2-hydroxyglutarate (D-2-hydroxyglutarate or D-2-HG) to 2-oxoglutarate and of (R)-malate (D-malate) to oxaloacetate. Is functionally tied to L-serine biosynthesis, via its coupling with the D-3-phosphoglycerate dehydrogenase SerA, encoded by the adjacent gene in the locus. Is required for the utilization of D-2-hydroxyglutarate as well as D-malate as the sole carbon source for growth of P.stutzeri. Active in vitro with artificial electron acceptors such as 2,6-dichlorophenolindophenol (DCPIP) and appears to couple with electron transfer flavoprotein (ETF) for efficient oxidation of both D-2-hydroxyglutarate and D-malate in vivo. Cannot catalyze the oxidation of L-2-hydroxyglutarate, D-lactate, D-tartrate, D-2-hydroxybutanoate, D-mandelate, D-glycerate and D-phenyllactate. The polypeptide is D-2-hydroxyglutarate dehydrogenase (Stutzerimonas stutzeri (strain A1501) (Pseudomonas stutzeri)).